The following is a 554-amino-acid chain: Folate synthesis bifunctional protein, mitochondrial (554 aa).

A mitochondrion-targeting transit peptide spans 1 to 42 (MAPLLSQTLIHTGRFLLRRFLEPPPAVISAVAASRVCFHRYY). The tract at residues 90 to 215 (VIALGSNIGN…SFVLAPLVDL (126 aa)) is HPPK. One can recognise a Pterin-binding domain in the interval 273 to 541 (THVMGILNLT…NVRHNADAAK (269 aa)). Residues 275–554 (VMGILNLTPD…AMLRRRRSKG (280 aa)) are DHPS. Asn-280 is a Mg(2+) binding site. (7,8-dihydropterin-6-yl)methyl diphosphate-binding positions include Thr-320, Asp-357, Asn-376, Asp-449, Lys-494, and 529–531 (RVH).

It in the N-terminal section; belongs to the HPPK family. In the C-terminal section; belongs to the DHPS family. The cofactor is Mg(2+). Ubiquitous.

Its subcellular location is the mitochondrion. It catalyses the reaction 6-hydroxymethyl-7,8-dihydropterin + ATP = (7,8-dihydropterin-6-yl)methyl diphosphate + AMP + H(+). The enzyme catalyses (7,8-dihydropterin-6-yl)methyl diphosphate + 4-aminobenzoate = 7,8-dihydropteroate + diphosphate. The protein operates within cofactor biosynthesis; tetrahydrofolate biosynthesis; 2-amino-4-hydroxy-6-hydroxymethyl-7,8-dihydropteridine diphosphate from 7,8-dihydroneopterin triphosphate: step 4/4. It functions in the pathway cofactor biosynthesis; tetrahydrofolate biosynthesis; 7,8-dihydrofolate from 2-amino-4-hydroxy-6-hydroxymethyl-7,8-dihydropteridine diphosphate and 4-aminobenzoate: step 1/2. Its function is as follows. Catalyzes the first two consecutive steps of tetrahydrofolate biosynthesis. The protein is Folate synthesis bifunctional protein, mitochondrial of Arabidopsis thaliana (Mouse-ear cress).